A 357-amino-acid chain; its full sequence is G-protein coupled receptor 183 (357 aa).

Over 1–32 (MANNFTTPLAASHGNNCDLYAHHSTARILMPL) the chain is Extracellular. Residue Asn-4 is glycosylated (N-linked (GlcNAc...) asparagine). The chain crosses the membrane as a helical span at residues 33–53 (HYSLVFIIGLVGNLLALVVIV). Over 54–68 (QNRKKINSTTLYSMN) the chain is Cytoplasmic. Residues 69 to 89 (LVISDILFTTALPTRIVYYAL) form a helical membrane-spanning segment. A 7alpha,25-dihydroxycholesterol-binding site is contributed by Arg-83. Over 90 to 101 (GFDWRIGDALCR) the chain is Extracellular. An intrachain disulfide couples Cys-100 to Cys-177. A helical transmembrane segment spans residues 102–122 (ITALLFYINTYAGVNFMTCLS). 2 residues coordinate 7alpha,25-dihydroxycholesterol: Tyr-108 and Tyr-112. The tract at residues 122–130 (SIDRFFAVV) is interaction with G proteins. Residues 123-143 (IDRFFAVVHPLRYNKIKRIEY) are Cytoplasmic-facing. A helical membrane pass occupies residues 144-164 (AKGICVFVWILVFAQTLPLLL). Residues 165-190 (KPMSKQEADKTTCMEYPNFEGTASLP) lie on the Extracellular side of the membrane. Residues 191–211 (WILLGACLLGYVLPLAIILLC) form a helical membrane-spanning segment. The Cytoplasmic portion of the chain corresponds to 212 to 240 (YSQICCKLFRTAKQNPLTEKSGVNKKALN). A helical transmembrane segment spans residues 241 to 261 (TIILIIGVFVLCFTPYHVAIM). Tyr-256 contacts 7alpha,25-dihydroxycholesterol. At 262–287 (QHMVKTLYAPGALGCGVRHSFQISLH) the chain is on the extracellular side. A helical transmembrane segment spans residues 288–308 (FTVCLMNFNCCMDPFIYFFAC). The Cytoplasmic portion of the chain corresponds to 309–357 (KGYKRKVMKMLKRQVSVSISSAVRSAPEENSREMTESQMMIHSKASNGR). Phosphoserine is present on residues Ser-324 and Ser-345. Positions 336-357 (EENSREMTESQMMIHSKASNGR) are disordered. Polar residues predominate over residues 344–357 (ESQMMIHSKASNGR).

It belongs to the G-protein coupled receptor 1 family. As to quaternary structure, homodimer and heterodimer. Heterodimerizes with CXCR5; leading to modulate the interaction between of CXCL13 and CXCR5.

It is found in the cell membrane. In terms of biological role, G-protein coupled receptor expressed in lymphocytes that acts as a chemotactic receptor for B-cells, T-cells, splenic dendritic cells, monocytes/macrophages and astrocytes. Receptor for oxysterol 7-alpha,25-dihydroxycholesterol (7-alpha,25-OHC) and other related oxysterols. Mediates cell positioning and movement of a number of cells by binding the 7-alpha,25-OHC ligand that forms a chemotactic gradient. Binding of 7-alpha,25-OHC mediates the correct localization of B-cells during humoral immune responses. Guides B-cell movement along the B-cell zone-T-cell zone boundary and later to interfollicular and outer follicular regions. Its specific expression during B-cell maturation helps position B-cells appropriately for mounting T-dependent antibody responses. Collaborates with CXCR5 to mediate B-cell migration; probably by forming a heterodimer with CXCR5 that affects the interaction between of CXCL13 and CXCR5. Also acts as a chemotactic receptor for some T-cells upon binding to 7-alpha,25-OHC ligand. Promotes follicular helper T (Tfh) cells differentiation by positioning activated T-cells at the follicle-T-zone interface, promoting contact of newly activated CD4 T-cells with activated dendritic cells and exposing them to Tfh-cell-promoting inducible costimulator (ICOS) ligand. Expression in splenic dendritic cells is required for their homeostasis, localization and ability to induce B- and T-cell responses: GPR183 acts as a chemotactic receptor in dendritic cells that mediates the accumulation of CD4(+) dendritic cells in bridging channels. Regulates migration of astrocytes and is involved in communication between astrocytes and macrophages. Promotes osteoclast precursor migration to bone surfaces. Signals constitutively through G(i)-alpha, but not G(s)-alpha or G(q)-alpha. Signals constitutively also via MAPK1/3 (ERK1/2). This Rattus norvegicus (Rat) protein is G-protein coupled receptor 183 (Gpr183).